A 317-amino-acid polypeptide reads, in one-letter code: Melanocyte-stimulating hormone receptor (317 aa).

Residues 1-37 (MPVQGSQRRLLGSLNSTPTATPHLGLAANQTGARCRE) are Extracellular-facing. Asn-29 carries an N-linked (GlcNAc...) asparagine glycan. The helical transmembrane segment at 38–63 (VSIPDGLFLSLGLVSLVENVLVVTAI) threads the bilayer. At 64-72 (AKNRNLHSP) the chain is on the cytoplasmic side. The chain crosses the membrane as a helical span at residues 73 to 93 (MYCFICCLALSDLLVSGSNML). At 94-118 (ETAVTLLLEAGALVARAAVVQQLDN) the chain is on the extracellular side. The helical transmembrane segment at 119-140 (VIDVITCSSMLSSLCFLGAIAV) threads the bilayer. Residues 141–163 (DRYISIFYALRYHSIVTLPRAQR) lie on the Cytoplasmic side of the membrane. The chain crosses the membrane as a helical span at residues 164–183 (AIAAIWVASVLCSTLFIAYY). At 184–191 (DHAAVLLC) the chain is on the extracellular side. A helical transmembrane segment spans residues 192 to 211 (LVVFFLAMLVLMAVLYVHML). The Cytoplasmic portion of the chain corresponds to 212-240 (ARACQHAQGIARLHKRQRLAHQGFGLKGA). Residues 241-266 (ATLTILLGIFFLCWGPFFLHLTLIVL) traverse the membrane as a helical segment. The Extracellular segment spans residues 267–279 (CPQHPTCSCIFKN). A helical transmembrane segment spans residues 280–300 (FNLFLALIICNAIIDPLIYAF). At 301–317 (RSQELRRTLKEVLLCSW) the chain is on the cytoplasmic side. Residue Cys-315 is the site of S-palmitoyl cysteine attachment.

It belongs to the G-protein coupled receptor 1 family. As to quaternary structure, interacts with MGRN1, but does not undergo MGRN1-mediated ubiquitination; this interaction competes with GNAS-binding and thus inhibits agonist-induced cAMP production. Interacts with OPN3; the interaction results in a decrease in MC1R-mediated cAMP signaling and ultimately a decrease in melanin production in melanocytes. In terms of tissue distribution, expressed in the adrenal gland.

The protein resides in the cell membrane. Functionally, receptor for MSH (alpha, beta and gamma) and ACTH. The activity of this receptor is mediated by G proteins which activate adenylate cyclase. Mediates melanogenesis, the production of eumelanin (black/brown) and phaeomelanin (red/yellow), via regulation of cAMP signaling in melanocytes. The chain is Melanocyte-stimulating hormone receptor (MC1R) from Macaca mulatta (Rhesus macaque).